The following is a 202-amino-acid chain: Cryptic protein (202 aa).

Residues 1 to 35 (MRANSPTQGISLKMHQARPLFLVTVALQLIGLGYS) form the signal peptide. Asparagine 65 carries N-linked (GlcNAc...) asparagine glycosylation. The region spanning 94-123 (PVSRCCHNGGTCVLGSFCVCPAYFTGRYCE) is the EGF-like domain. 3 disulfides stabilise this stretch: cysteine 98–cysteine 105, cysteine 99–cysteine 111, and cysteine 113–cysteine 122. Aspartate 166 carries the GPI-anchor amidated aspartate lipid modification. The propeptide at 167 to 202 (LKSFLSSGARGSRECSIPSLLLLVLCLLLQGVAGKG) is removed in mature form.

This sequence belongs to the EGF-CFC (Cripto-1/FRL1/Cryptic) family. Post-translationally, N-glycosylated. No expressed in adult tissues.

It localises to the cell membrane. Its subcellular location is the secreted. Its function is as follows. Nodal coreceptor involved in the correct establishment of the left-right axis. May play a role in mesoderm and/or neural patterning during gastrulation. The chain is Cryptic protein (Cfc1) from Mus musculus (Mouse).